The following is a 115-amino-acid chain: Large ribosomal subunit protein bL20 (115 aa).

Belongs to the bacterial ribosomal protein bL20 family.

In terms of biological role, binds directly to 23S ribosomal RNA and is necessary for the in vitro assembly process of the 50S ribosomal subunit. It is not involved in the protein synthesizing functions of that subunit. This Prochlorococcus marinus (strain NATL2A) protein is Large ribosomal subunit protein bL20.